A 430-amino-acid polypeptide reads, in one-letter code: Asparagine--tRNA ligase (430 aa).

This sequence belongs to the class-II aminoacyl-tRNA synthetase family. As to quaternary structure, homodimer.

It is found in the cytoplasm. The catalysed reaction is tRNA(Asn) + L-asparagine + ATP = L-asparaginyl-tRNA(Asn) + AMP + diphosphate + H(+). This Staphylococcus epidermidis (strain ATCC 35984 / DSM 28319 / BCRC 17069 / CCUG 31568 / BM 3577 / RP62A) protein is Asparagine--tRNA ligase.